The primary structure comprises 269 residues: Formamidopyrimidine-DNA glycosylase (269 aa).

The active-site Schiff-base intermediate with DNA is the Pro2. Catalysis depends on Glu3, which acts as the Proton donor. Catalysis depends on Lys57, which acts as the Proton donor; for beta-elimination activity. His90, Arg109, and Lys150 together coordinate DNA. The FPG-type zinc-finger motif lies at 235–269 (QVYGRKGEPCRVCGTPIVATKHAQRATFYCRQCQK). Arg259 acts as the Proton donor; for delta-elimination activity in catalysis.

Belongs to the FPG family. As to quaternary structure, monomer. The cofactor is Zn(2+).

The enzyme catalyses Hydrolysis of DNA containing ring-opened 7-methylguanine residues, releasing 2,6-diamino-4-hydroxy-5-(N-methyl)formamidopyrimidine.. The catalysed reaction is 2'-deoxyribonucleotide-(2'-deoxyribose 5'-phosphate)-2'-deoxyribonucleotide-DNA = a 3'-end 2'-deoxyribonucleotide-(2,3-dehydro-2,3-deoxyribose 5'-phosphate)-DNA + a 5'-end 5'-phospho-2'-deoxyribonucleoside-DNA + H(+). In terms of biological role, involved in base excision repair of DNA damaged by oxidation or by mutagenic agents. Acts as a DNA glycosylase that recognizes and removes damaged bases. Has a preference for oxidized purines, such as 7,8-dihydro-8-oxoguanine (8-oxoG). Has AP (apurinic/apyrimidinic) lyase activity and introduces nicks in the DNA strand. Cleaves the DNA backbone by beta-delta elimination to generate a single-strand break at the site of the removed base with both 3'- and 5'-phosphates. The chain is Formamidopyrimidine-DNA glycosylase from Escherichia coli O157:H7.